The following is a 346-amino-acid chain: MDQYCILGRIGEGAHGIVFKAKHVETGEIVALKKVALRRLEDGIPNQALREIKALQEIEDSQYVVQLKAVFPHGAGFVLAFEFMLSDLAEVVRHAQRPLAPAQVKSYLQMLLKGVAFCHANNIVHRDLKPANLLISASGQLKIADFGLARVFSPDGGRLYTHQVATRWYRAPELLYGARQYDQGVDLWAVGCIMGELLNGSPLFPGENDIEQLCCVLRILGTPSPRVWPEITELPDYNKISFKEQAPVPLEEVLPDASHQALDLLGQFLLYPPRQRIAASQALLHQYFFTAPLPAHPSELPIPQRPGGPTPKAHPGPPHVHDFHVDRPLEESLLNPELIRPFIPEG.

In terms of domain architecture, Protein kinase spans 4-288; sequence YCILGRIGEG…ASQALLHQYF (285 aa). Residues 10–18 and lysine 33 contribute to the ATP site; that span reads IGEGAHGIV. The active-site Proton acceptor is aspartate 127. Residues 298–324 are disordered; sequence SELPIPQRPGGPTPKAHPGPPHVHDFH. The segment covering 303-318 has biased composition (pro residues); sequence PQRPGGPTPKAHPGPP.

This sequence belongs to the protein kinase superfamily. CMGC Ser/Thr protein kinase family. CDC2/CDKX subfamily. Monomer. Interacts with TBC1D32 and MAK.

The protein resides in the nucleus. Its subcellular location is the cytoplasm. It localises to the cell projection. The protein localises to the cilium. The catalysed reaction is L-seryl-[protein] + ATP = O-phospho-L-seryl-[protein] + ADP + H(+). The enzyme catalyses L-threonyl-[protein] + ATP = O-phospho-L-threonyl-[protein] + ADP + H(+). Functionally, required for high-level Shh responses in the developing neural tube. Together with TBC1D32, controls the structure of the primary cilium by coordinating assembly of the ciliary membrane and axoneme, allowing GLI2 to be properly activated in response to SHH signaling. Involved in cell growth. Activates CDK2, a kinase involved in the control of the cell cycle, by phosphorylating residue 'Thr-160'. This is Cyclin-dependent kinase 20 (Cdk20) from Rattus norvegicus (Rat).